The sequence spans 540 residues: Putative laccase-11 (540 aa).

Plastocyanin-like domains lie at 1 to 114 (MATV…PPRG), 124 to 279 (REVP…YYGA), and 389 to 523 (NFPA…NDGP). Residues H48, H50, H93, and H95 each coordinate Cu cation. The Cu cation site is built by H440, H443, H445, H502, C503, H504, and H508.

It belongs to the multicopper oxidase family. Cu cation serves as cofactor.

Its subcellular location is the secreted. The protein localises to the extracellular space. It localises to the apoplast. It catalyses the reaction 4 hydroquinone + O2 = 4 benzosemiquinone + 2 H2O. Its function is as follows. Lignin degradation and detoxification of lignin-derived products. The polypeptide is Putative laccase-11 (LAC11) (Oryza sativa subsp. japonica (Rice)).